The chain runs to 240 residues: MATLFIADLHLCVEEPAITAGFLRFLAGEARKADALYILGDLFEAWIGDDDPNPLHRQMAAAIKAVSDSGVPCYFIHGNRDFLLGKRFARESGMTLLPEEKVLELYGRRVLIMHGDTLCTDDIGYQAFRAKVHKPWLQTLFLALPLFVRKRIAARMRANSKEANSSKSLAIMDVNQNAVVSAMEKHQVQWLIHGHTHRPAVHELIANQQPAFRVVLGAWHTEGSMVKVTADDVELIHFPF.

Residues D8, H10, D41, N79, and H114 each contribute to the Mn(2+) site. 79–80 provides a ligand contact to substrate; that stretch reads NR. 5 residues coordinate substrate: D122, S160, N164, K167, and H195. Mn(2+)-binding residues include H195 and H197.

It belongs to the LpxH family. The cofactor is Mn(2+).

It is found in the cell inner membrane. The enzyme catalyses UDP-2-N,3-O-bis[(3R)-3-hydroxytetradecanoyl]-alpha-D-glucosamine + H2O = 2-N,3-O-bis[(3R)-3-hydroxytetradecanoyl]-alpha-D-glucosaminyl 1-phosphate + UMP + 2 H(+). It functions in the pathway glycolipid biosynthesis; lipid IV(A) biosynthesis; lipid IV(A) from (3R)-3-hydroxytetradecanoyl-[acyl-carrier-protein] and UDP-N-acetyl-alpha-D-glucosamine: step 4/6. Functionally, hydrolyzes the pyrophosphate bond of UDP-2,3-diacylglucosamine to yield 2,3-diacylglucosamine 1-phosphate (lipid X) and UMP by catalyzing the attack of water at the alpha-P atom. Involved in the biosynthesis of lipid A, a phosphorylated glycolipid that anchors the lipopolysaccharide to the outer membrane of the cell. In Escherichia fergusonii (strain ATCC 35469 / DSM 13698 / CCUG 18766 / IAM 14443 / JCM 21226 / LMG 7866 / NBRC 102419 / NCTC 12128 / CDC 0568-73), this protein is UDP-2,3-diacylglucosamine hydrolase.